A 452-amino-acid polypeptide reads, in one-letter code: Cholesterol 7-desaturase nvd 2 (452 aa).

Helical transmembrane passes span 6 to 26 (LIRITVMVITSERLLILMGLC) and 32 to 52 (FPVMIRVVFNAAVAIVIALVM). Residues 107 to 212 (WFKVADSTWI…CCEVDGMAYL (106 aa)) form the Rieske domain. [2Fe-2S] cluster is bound by residues cysteine 148, histidine 150, cysteine 169, and histidine 172.

The protein belongs to the cholesterol 7-desaturase family. [2Fe-2S] cluster is required as a cofactor.

The protein resides in the membrane. It catalyses the reaction cholesterol + NADPH + O2 + H(+) = 7-dehydrocholesterol + NADP(+) + 2 H2O. The enzyme catalyses cholesterol + NADH + O2 + H(+) = 7-dehydrocholesterol + NAD(+) + 2 H2O. The protein operates within steroid hormone biosynthesis; dafachronic acid biosynthesis. Its function is as follows. Catalyzes the production of 7-dehydrocholesterol (7-DHC or cholesta-5,7-dien-3beta-ol) by inserting a double bond (desaturating) at the C7-C8 single bond of cholesterol. Essential regulator of steroid biosynthesis as this reaction is the first step in the synthesis of the steroid hormone Delta(7)-dafachronic acid. The protein is Cholesterol 7-desaturase nvd 2 of Ciona intestinalis (Transparent sea squirt).